Here is a 144-residue protein sequence, read N- to C-terminus: MGASKVKQDMPPPGGYGPIDYKRNLPRRGLSGYSMLALGIGTLIYGHWSMMKWNRERRRLQIEDFEARIALLPLLQAETDRRTLQMLRENLEEEAIIMKDVPDWKVGESVFHTTRWVAPLIGELYGLRTTEEALHASHGFMWYA.

A helical transmembrane segment spans residues 30-51; that stretch reads LSGYSMLALGIGTLIYGHWSMM.

The protein belongs to the complex I NDUFA13 subunit family. Complex I is composed of 45 different subunits. Interacts with CARD15, but not with CARD4. Interacts with STAT3, but not with STAT1, STAT2 and STAT5A. Interacts with OLFM4.

It is found in the mitochondrion inner membrane. The protein localises to the nucleus. Accessory subunit of the mitochondrial membrane respiratory chain NADH dehydrogenase (Complex I), that is believed not to be involved in catalysis. Complex I functions in the transfer of electrons from NADH to the respiratory chain. The immediate electron acceptor for the enzyme is believed to be ubiquinone. Involved in the interferon/all-trans-retinoic acid (IFN/RA) induced cell death. This apoptotic activity is inhibited by interaction with viral IRF1. Prevents the transactivation of STAT3 target genes. May play a role in CARD15-mediated innate mucosal responses and serve to regulate intestinal epithelial cell responses to microbes. This Pongo pygmaeus (Bornean orangutan) protein is NADH dehydrogenase [ubiquinone] 1 alpha subcomplex subunit 13 (NDUFA13).